A 99-amino-acid polypeptide reads, in one-letter code: Putative protein tag-209 (99 aa).

Positions 1 to 16 (MLKLLAFVALLSVSVS) are cleaved as a signal peptide.

The sequence is that of Putative protein tag-209 (tag-209) from Caenorhabditis elegans.